The sequence spans 320 residues: ATP-dependent 6-phosphofructokinase (320 aa).

ATP is bound at residue glycine 12. ADP contacts are provided by residues 22–26 (RGVVR) and 55–60 (RYSVSD). ATP contacts are provided by residues 73–74 (RF) and 103–106 (GDGS). Aspartate 104 contributes to the Mg(2+) binding site. 126–128 (TID) contacts substrate. Aspartate 128 functions as the Proton acceptor in the catalytic mechanism. Residue arginine 155 participates in ADP binding. Residues arginine 163 and 170–172 (MGR) contribute to the substrate site. ADP contacts are provided by residues 186-188 (GCE), lysine 212, and 214-216 (KKH). Residues glutamate 223, arginine 244, and 250-253 (HIQR) contribute to the substrate site.

The protein belongs to the phosphofructokinase type A (PFKA) family. ATP-dependent PFK group I subfamily. Prokaryotic clade 'B1' sub-subfamily. Homotetramer. Mg(2+) is required as a cofactor.

The protein resides in the cytoplasm. It carries out the reaction beta-D-fructose 6-phosphate + ATP = beta-D-fructose 1,6-bisphosphate + ADP + H(+). It participates in carbohydrate degradation; glycolysis; D-glyceraldehyde 3-phosphate and glycerone phosphate from D-glucose: step 3/4. Its activity is regulated as follows. Allosterically activated by ADP and other diphosphonucleosides, and allosterically inhibited by phosphoenolpyruvate. Functionally, catalyzes the phosphorylation of D-fructose 6-phosphate to fructose 1,6-bisphosphate by ATP, the first committing step of glycolysis. In Citrobacter koseri (strain ATCC BAA-895 / CDC 4225-83 / SGSC4696), this protein is ATP-dependent 6-phosphofructokinase.